We begin with the raw amino-acid sequence, 1480 residues long: C-type mannose receptor 2 (1480 aa).

The signal sequence occupies residues 1–30; that stretch reads MGPIRPALAPWPRHLLRCVLLLGGLRLGHP. At 31–1413 the chain is on the extracellular side; it reads ADSAAALLEP…SAALPENPVA (1383 aa). The 127-residue stretch at 40–166 folds into the Ricin B-type lectin domain; it reads PDVFLIFSQG…WNIYGSEEDL (127 aa). Intrachain disulfides connect Cys-53/Cys-67 and Cys-92/Cys-111. 2 N-linked (GlcNAc...) asparagine glycosylation sites follow: Asn-101 and Asn-139. In terms of domain architecture, Fibronectin type-II spans 181–229; it reads SHGKPCTIPFKYDNQWFHGCTSTGREDGHLWCATTQDYGKDERWGFCPI. Intrachain disulfides connect Cys-186-Cys-212, Cys-200-Cys-227, Cys-265-Cys-358, and Cys-334-Cys-350. A C-type lectin 1 domain is found at 243–359; sequence LTDSCYQFNF…CSIALPYVCK (117 aa). Asn-363 carries an N-linked (GlcNAc...) asparagine glycan. C-type lectin domains follow at residues 388–504, 527–643, 677–808, 831–950, 978–1106, 1131–1242, and 1271–1391; these read FQGH…SICK, HSPS…RYIC, KLRH…WICK, FQEA…YICK, FLNK…GFIC, YLNR…GAVC, and FREH…GVVC. Intrachain disulfides connect Cys-409–Cys-503, Cys-480–Cys-495, Cys-617–Cys-634, Cys-703–Cys-807, Cys-784–Cys-799, Cys-852–Cys-949, and Cys-926–Cys-941. The N-linked (GlcNAc...) asparagine glycan is linked to Asn-1028. Cys-1077 and Cys-1097 are oxidised to a cystine. Lys-1141 is covalently cross-linked (Glycyl lysine isopeptide (Lys-Gly) (interchain with G-Cter in SUMO1)). Cys-1219 and Cys-1233 are oxidised to a cystine. Asn-1348 carries N-linked (GlcNAc...) asparagine glycosylation. A disulfide bridge links Cys-1367 with Cys-1382. Residues 1414–1434 form a helical membrane-spanning segment; sequence LVVVLTAAVLLLLALLTGALI. At 1435–1480 the chain is on the cytoplasmic side; it reads LYRRRQSAERGSFEGARYSRSSRSGPAEATEKNILVSDMEMNEQQE. The interval 1446 to 1480 is disordered; the sequence is SFEGARYSRSSRSGPAEATEKNILVSDMEMNEQQE.

Interacts directly with PLAUR/UPAR and PLAU/pro-UPA to form a tri-molecular complex. Interacts with collagen V. Interacts with C-terminal region of type I collagen/COL1A1. N-glycosylated. In terms of processing, phosphorylated.

The protein localises to the cell membrane. In terms of biological role, may play a role as endocytotic lectin receptor displaying calcium-dependent lectin activity. Internalizes glycosylated ligands from the extracellular space for release in an endosomal compartment via clathrin-mediated endocytosis. May be involved in plasminogen activation system controlling the extracellular level of PLAUR/PLAU, and thus may regulate protease activity at the cell surface. May contribute to cellular uptake, remodeling and degradation of extracellular collagen matrices. May participate in remodeling of extracellular matrix cooperating with the matrix metalloproteinases (MMPs) secreted by hepatic stellate cells. May mediate endocytosis of partially degraded collagens and glycoproteins produced in the extracellular matrix by MMPs. The polypeptide is C-type mannose receptor 2 (Mrc2) (Rattus norvegicus (Rat)).